A 229-amino-acid chain; its full sequence is 3-isopropylmalate dehydratase small subunit (229 aa).

Positions 208-229 (KIESAREPDDDWTGPLADRGII) are disordered.

It belongs to the LeuD family. LeuD type 1 subfamily. As to quaternary structure, heterodimer of LeuC and LeuD.

The catalysed reaction is (2R,3S)-3-isopropylmalate = (2S)-2-isopropylmalate. It participates in amino-acid biosynthesis; L-leucine biosynthesis; L-leucine from 3-methyl-2-oxobutanoate: step 2/4. Functionally, catalyzes the isomerization between 2-isopropylmalate and 3-isopropylmalate, via the formation of 2-isopropylmaleate. This is 3-isopropylmalate dehydratase small subunit from Bifidobacterium longum subsp. infantis (strain ATCC 15697 / DSM 20088 / JCM 1222 / NCTC 11817 / S12).